Consider the following 63-residue polypeptide: Cytochrome c oxidase subunit 5C (63 aa).

The helical transmembrane segment at 16–34 (VVKEIFIGLTLGLVAGGMW) threads the bilayer.

It belongs to the cytochrome c oxidase subunit 5C family.

It localises to the mitochondrion inner membrane. This protein is one of the nuclear-coded polypeptide chains of cytochrome c oxidase, the terminal oxidase in mitochondrial electron transport. The protein is Cytochrome c oxidase subunit 5C (COX5C) of Hordeum vulgare (Barley).